A 459-amino-acid chain; its full sequence is ATP-dependent protease ATPase subunit HslU (459 aa).

Residues V18, G60–E65, D269, E337, and R409 contribute to the ATP site.

This sequence belongs to the ClpX chaperone family. HslU subfamily. In terms of assembly, a double ring-shaped homohexamer of HslV is capped on each side by a ring-shaped HslU homohexamer. The assembly of the HslU/HslV complex is dependent on binding of ATP.

Its subcellular location is the cytoplasm. Functionally, ATPase subunit of a proteasome-like degradation complex; this subunit has chaperone activity. The binding of ATP and its subsequent hydrolysis by HslU are essential for unfolding of protein substrates subsequently hydrolyzed by HslV. HslU recognizes the N-terminal part of its protein substrates and unfolds these before they are guided to HslV for hydrolysis. The protein is ATP-dependent protease ATPase subunit HslU of Myxococcus xanthus (strain DK1622).